The primary structure comprises 627 residues: 5-aminolevulinate synthase, non-specific, mitochondrial (627 aa).

Residues 1–58 (MDVIVRRCPFLARVPQAFFQQSKKSLAVYAQRCPFMMELASKPMAPSLARALCSSSSS) constitute a mitochondrion transit peptide. Substrate contacts are provided by Arg-204, Ser-321, and Lys-340. The pyridoxal 5'-phosphate site is built by Ser-373, His-401, and Thr-429. Lys-432 is an active-site residue. Lys-432 is subject to N6-(pyridoxal phosphate)lysine. Pyridoxal 5'-phosphate is bound by residues Thr-461 and Thr-462. Substrate is bound at residue Thr-549.

This sequence belongs to the class-II pyridoxal-phosphate-dependent aminotransferase family. As to quaternary structure, homodimer. It depends on pyridoxal 5'-phosphate as a cofactor.

Its subcellular location is the mitochondrion inner membrane. The enzyme catalyses succinyl-CoA + glycine + H(+) = 5-aminolevulinate + CO2 + CoA. The protein operates within porphyrin-containing compound metabolism; protoporphyrin-IX biosynthesis; 5-aminolevulinate from glycine: step 1/1. Functionally, catalyzes the pyridoxal 5'-phosphate (PLP)-dependent condensation of succinyl-CoA and glycine to form aminolevulinic acid (ALA), with CoA and CO2 as by-products. The polypeptide is 5-aminolevulinate synthase, non-specific, mitochondrial (alas1) (Opsanus tau (Oyster toadfish)).